We begin with the raw amino-acid sequence, 647 residues long: MSTTSSVRVRLAFVALLSATTFYCIHKYRRLKHLKNLSLNPSSTLKASRGKIFFISQTGTAKALAQRLHELCASNDIAFDIVDPHSYEPEDLPKETLVLFIASTWDGGKPPKNGEFLVNWLGESAEDFRVGSLLLSDCKFAVFGVGSRAYGESYNAVAKELSSRMIGLGGLEMIPVGEGDVDDGELDRAFQDWCDGVIRVLKGGSAQETNGVSQQIGAVEDDLEYYDSTDEEDEDNDADGGIVDLEDIAGKAPSKRNGVVKVTKVDGKKEMVTPVIRASLTKQGYKIIGSHSGVKICRWTKSQLRGRGGCYKHSFYGIESHRCMETTPSLACANKCVFCWRHHTNPVGKSWQWKMDEPSVIVKGALDLHKNMIKQMKGVPGVTPEKLQEGLNPRHCALSLVGEPIMYPEINALVDELHGRRISTFLVTNAQFPEKILMMKPITQLYVSVDAATKESLKAIDRPLFADFWERFIDSLKALQEKQQRTVYRLTLVKGWNTEELDAYFNLFSIGKPDFIEIKGVTYCGSSATSKLTMENVPWHTDVKAFSEALSLKSNGEYEVACEHAHSCCVLLGRTEKFKVDGKWFTWIDYEKFHDLVASGEPFTSTDYMAQTPSWAVYGAQEGGFDPGQLRYKKERNHPPKPQAVLA.

Positions 50-198 (GKIFFISQTG…AFQDWCDGVI (149 aa)) constitute a Flavodoxin-like domain. Residues 56 to 60 (SQTGT) and 142 to 174 (VFGVGSRAYGESYNAVAKELSSRMIGLGGLEMI) each bind FMN. The region spanning 316-559 (YGIESHRCME…LSLKSNGEYE (244 aa)) is the Radical SAM core domain. 3 residues coordinate [4Fe-4S] cluster: cysteine 332, cysteine 336, and cysteine 339.

This sequence belongs to the TYW1 family. Requires [4Fe-4S] cluster as cofactor.

The enzyme catalyses N(1)-methylguanosine(37) in tRNA(Phe) + pyruvate + S-adenosyl-L-methionine = 4-demethylwyosine(37) in tRNA(Phe) + 5'-deoxyadenosine + L-methionine + CO2 + H2O. The protein operates within tRNA modification; wybutosine-tRNA(Phe) biosynthesis. Probable component of the wybutosine biosynthesis pathway. Wybutosine is a hyper modified guanosine with a tricyclic base found at the 3'-position adjacent to the anticodon of eukaryotic phenylalanine tRNA. Catalyzes the condensation of N-methylguanine with 2 carbon atoms from pyruvate to form the tricyclic 4-demethylwyosine, an intermediate in wybutosine biosynthesis. In Arabidopsis thaliana (Mouse-ear cress), this protein is S-adenosyl-L-methionine-dependent tRNA 4-demethylwyosine synthase (TYW1).